The sequence spans 830 residues: Penicillin-binding protein 1A (830 aa).

The Cytoplasmic portion of the chain corresponds to 1-18 (MGKKKKKRKSSAFKIILN). The helical; Signal-anchor for type II membrane protein transmembrane segment at 19–39 (VFLSIFLVAGVAFGGIVFAMI) threads the bilayer. Over 40 to 830 (KTAPPLNVQQ…QNHEDNKNKQ (791 aa)) the chain is Extracellular. The tract at residues 57 to 229 (SILYDDKGQY…PSVYYPYSSA (173 aa)) is transglycosylase. Glu-96 serves as the catalytic Proton donor; for transglycosylase activity. The interval 357–641 (ASAVIMDYHN…AARLWGDIMK (285 aa)) is transpeptidase. Catalysis depends on Ser-398, which acts as the Acyl-ester intermediate; for transpeptidase activity. Positions 754–830 (GGSLPPTEEK…QNHEDNKNKQ (77 aa)) are disordered. Over residues 760–786 (TEEKNNSNTRDKNKDKNKNKNKDKNPS) the composition is skewed to basic and acidic residues. Low complexity predominate over residues 787–820 (QDKPNNNNNDNNSNNNNNNNDNNNNTKPPENDSN). Residues 821–830 (QNHEDNKNKQ) show a composition bias toward basic and acidic residues.

This sequence in the N-terminal section; belongs to the glycosyltransferase 51 family. The protein in the C-terminal section; belongs to the transpeptidase family.

It localises to the cell membrane. The enzyme catalyses [GlcNAc-(1-&gt;4)-Mur2Ac(oyl-L-Ala-gamma-D-Glu-L-Lys-D-Ala-D-Ala)](n)-di-trans,octa-cis-undecaprenyl diphosphate + beta-D-GlcNAc-(1-&gt;4)-Mur2Ac(oyl-L-Ala-gamma-D-Glu-L-Lys-D-Ala-D-Ala)-di-trans,octa-cis-undecaprenyl diphosphate = [GlcNAc-(1-&gt;4)-Mur2Ac(oyl-L-Ala-gamma-D-Glu-L-Lys-D-Ala-D-Ala)](n+1)-di-trans,octa-cis-undecaprenyl diphosphate + di-trans,octa-cis-undecaprenyl diphosphate + H(+). The catalysed reaction is Preferential cleavage: (Ac)2-L-Lys-D-Ala-|-D-Ala. Also transpeptidation of peptidyl-alanyl moieties that are N-acyl substituents of D-alanine.. It functions in the pathway cell wall biogenesis; peptidoglycan biosynthesis. In terms of biological role, cell wall formation. Synthesis of cross-linked peptidoglycan from the lipid intermediates. The enzyme has a penicillin-insensitive transglycosylase N-terminal domain (formation of linear glycan strands) and a penicillin-sensitive transpeptidase C-terminal domain (cross-linking of the peptide subunits). The protein is Penicillin-binding protein 1A (pbpA) of Clostridium botulinum (strain Hall / ATCC 3502 / NCTC 13319 / Type A).